Reading from the N-terminus, the 956-residue chain is Calsyntenin-3 (956 aa).

A signal peptide spans 1–19 (MTLLLLPLLLASLLASCSC). Residues 20 to 847 (NKANKHKPWI…SHRNSMIPSA (828 aa)) lie on the Extracellular side of the membrane. Cadherin domains follow at residues 29-145 (IEAE…APVF) and 146-246 (VERL…KPSW). Asn-299, Asn-327, Asn-347, Asn-507, and Asn-740 each carry an N-linked (GlcNAc...) asparagine glycan. A helical transmembrane segment spans residues 848–868 (ATLIIVVCVGFLVLMVVLGLV). The Cytoplasmic segment spans residues 869-956 (RIHSLHRRVS…RIIETPPHRY (88 aa)). Residues 917–956 (ACVTGAVGGQQEDEDSSDSEVADSPSSDERRIIETPPHRY) are disordered. The span at 927–937 (QEDEDSSDSEV) shows a compositional bias: acidic residues. The span at 943 to 956 (SDERRIIETPPHRY) shows a compositional bias: basic and acidic residues.

This sequence belongs to the calsyntenin family. Interacts (via cadherin domains) with both alpha and beta isoforms of neurexins (NRXN1, NRXN2 and NRXN3). Directly interacts with APBA2. Forms a tripartite complex with APBA2 and APP. Interacts with low affinity with KLC1. Interacts with SLC23A2/SVCT2. Proteolytically processed under normal cellular conditions. A primary zeta-cleavage generates a large extracellular (soluble) N-terminal domain (sAlc) and a short C-terminal transmembrane fragment (CTF1). A secondary cleavage catalyzed by gamma-secretase within the transmembrane domain releases the beta-Alc-beta chain in the extracellular milieu and produces an intracellular fragment (AlcICD). This processing is strongly suppressed in the tripartite complex formed with APBA2 and APP, which seems to prevent the association with gamma-secretase.

The protein resides in the postsynaptic cell membrane. The protein localises to the endoplasmic reticulum membrane. It is found in the golgi apparatus membrane. Its subcellular location is the cell projection. It localises to the dendrite. Postsynaptic adhesion molecule that binds to presynaptic neurexins to mediate both excitatory and inhibitory synapse formation. Promotes synapse development by acting as a cell adhesion molecule at the postsynaptic membrane, which associates with both neurexin-alpha and neurexin-beta proteins at the presynaptic membrane. Regulates the balance between excitatory and inhibitory synapses by inhibiting formation of excitatory parallel-fiber synapses and promoting formation of inhibitory synapses in the same neuron. May also be involved in ascorbate (vitamin C) uptake via its interaction with SLC23A2/SVCT2. Complex formation with APBA2 and APP, stabilizes APP metabolism and enhances APBA2-mediated suppression of beta-APP40 secretion, due to the retardation of intracellular APP maturation. The polypeptide is Calsyntenin-3 (CLSTN3) (Pongo abelii (Sumatran orangutan)).